We begin with the raw amino-acid sequence, 490 residues long: Ribulose bisphosphate carboxylase large chain (490 aa).

N127 and T177 together coordinate substrate. The active-site Proton acceptor is K179. K181 is a substrate binding site. 3 residues coordinate Mg(2+): K205, D207, and E208. An N6-carboxylysine modification is found at K205. Residue H297 is the Proton acceptor of the active site. Substrate-binding residues include R298, H330, and S382.

The protein belongs to the RuBisCO large chain family. Type I subfamily. In terms of assembly, heterohexadecamer of 8 large chains and 8 small chains. The cofactor is Mg(2+).

It localises to the plastid. The protein localises to the chloroplast. It catalyses the reaction 2 (2R)-3-phosphoglycerate + 2 H(+) = D-ribulose 1,5-bisphosphate + CO2 + H2O. The catalysed reaction is D-ribulose 1,5-bisphosphate + O2 = 2-phosphoglycolate + (2R)-3-phosphoglycerate + 2 H(+). In terms of biological role, ruBisCO catalyzes two reactions: the carboxylation of D-ribulose 1,5-bisphosphate, the primary event in carbon dioxide fixation, as well as the oxidative fragmentation of the pentose substrate in the photorespiration process. Both reactions occur simultaneously and in competition at the same active site. The sequence is that of Ribulose bisphosphate carboxylase large chain from Trieres chinensis (Marine centric diatom).